The primary structure comprises 354 residues: Glutamine synthetase (354 aa).

Residues 22–101 (IQAEYVWIDG…VLAETYNNDG (80 aa)) enclose the GS beta-grasp domain. In terms of domain architecture, GS catalytic spans 108 to 354 (HRHHAKKVFD…IIAETTILDK (247 aa)).

Belongs to the glutamine synthetase family. As to quaternary structure, homooctamer.

It localises to the cytoplasm. The enzyme catalyses L-glutamate + NH4(+) + ATP = L-glutamine + ADP + phosphate + H(+). The polypeptide is Glutamine synthetase (glnA) (Agaricus bisporus (White button mushroom)).